The following is a 211-amino-acid chain: MSALRTRLDELIAQTDLEVSEKQREQLVGYVELLDKWNKAYNLTSVRDPLEMLVKHILDSIVVSTHLPGERFIDVGTGPGLPGIPLAIMNPEKTFFLLDSLGKRIRFIKQVVHTLGLKNVTAIQSRVEEFQPEEKFDGVLSRAFASMTDMVEWCHHLPKQDSGVFLALKGLHPKDEIDLLPEWCSVTEVISLAVPELEGDRHLVILSRKEN.

S-adenosyl-L-methionine is bound by residues Gly76, Leu81, 127–128 (VE), and Arg142.

Belongs to the methyltransferase superfamily. RNA methyltransferase RsmG family.

Its subcellular location is the cytoplasm. The enzyme catalyses guanosine(527) in 16S rRNA + S-adenosyl-L-methionine = N(7)-methylguanosine(527) in 16S rRNA + S-adenosyl-L-homocysteine. In terms of biological role, specifically methylates the N7 position of guanine in position 527 of 16S rRNA. The sequence is that of Ribosomal RNA small subunit methyltransferase G from Vibrio campbellii (strain ATCC BAA-1116).